Here is a 159-residue protein sequence, read N- to C-terminus: NADH-quinone oxidoreductase subunit I (159 aa).

2 4Fe-4S ferredoxin-type domains span residues 51 to 80 (RRYENGEERCIACKLCEAICPAQAIVIEAD) and 90 to 119 (TRYDIDMTKCIYCGLCQEACPVDAIVEGPN). [4Fe-4S] cluster-binding residues include Cys-60, Cys-63, Cys-66, Cys-70, Cys-99, Cys-102, Cys-105, and Cys-109.

The protein belongs to the complex I 23 kDa subunit family. In terms of assembly, NDH-1 is composed of 14 different subunits. Subunits NuoA, H, J, K, L, M, N constitute the membrane sector of the complex. [4Fe-4S] cluster serves as cofactor.

It is found in the cell inner membrane. It catalyses the reaction a quinone + NADH + 5 H(+)(in) = a quinol + NAD(+) + 4 H(+)(out). Functionally, NDH-1 shuttles electrons from NADH, via FMN and iron-sulfur (Fe-S) centers, to quinones in the respiratory chain. The immediate electron acceptor for the enzyme in this species is believed to be ubiquinone. Couples the redox reaction to proton translocation (for every two electrons transferred, four hydrogen ions are translocated across the cytoplasmic membrane), and thus conserves the redox energy in a proton gradient. This chain is NADH-quinone oxidoreductase subunit I, found in Rickettsia peacockii (strain Rustic).